We begin with the raw amino-acid sequence, 217 residues long: Non-structural protein NS3 (217 aa).

Belongs to the orbivirus NS3 family.

Functionally, may play a role in the release of virions from infected cells. The polypeptide is Non-structural protein NS3 (Segment-10) (Camelus dromedarius (Dromedary)).